The primary structure comprises 207 residues: Glycerol-3-phosphate acyltransferase (207 aa).

Helical transmembrane passes span 4-24 (VVAT…SFAV), 58-78 (ILTL…AQWL), 86-106 (ETGI…PVFH), 120-140 (ILLA…LIIA), and 162-182 (VLMN…VLLI).

Belongs to the PlsY family. In terms of assembly, probably interacts with PlsX.

The protein localises to the cell inner membrane. It catalyses the reaction an acyl phosphate + sn-glycerol 3-phosphate = a 1-acyl-sn-glycero-3-phosphate + phosphate. Its pathway is lipid metabolism; phospholipid metabolism. Its function is as follows. Catalyzes the transfer of an acyl group from acyl-phosphate (acyl-PO(4)) to glycerol-3-phosphate (G3P) to form lysophosphatidic acid (LPA). This enzyme utilizes acyl-phosphate as fatty acyl donor, but not acyl-CoA or acyl-ACP. In Ralstonia pickettii (strain 12J), this protein is Glycerol-3-phosphate acyltransferase.